A 500-amino-acid chain; its full sequence is Hexokinase-3 (500 aa).

A helical transmembrane segment spans residues 4–24 (VGLGVAVGCAAVTCAIAAALV). The region spanning 35-487 (RRAVALLREF…SGVGAALLAA (453 aa)) is the Hexokinase domain. The hexokinase small subdomain stretch occupies residues 90–222 (SGSEEGVYYS…GLNVRVTALV (133 aa)). ADP-binding residues include G104, T105, and N106. 4 residues coordinate D-glucose: T188, K189, N223, and D224. The segment at 223-476 (NDTVGTLALG…RNVTLRVTED (254 aa)) is hexokinase large subdomain. ADP is bound at residue S247. N250, E278, and E309 together coordinate D-glucose. An ADP-binding site is contributed by G441.

It belongs to the hexokinase family. As to expression, expressed in roots, leaves, flowers, immature seeds and seed coat. Expressed in young shoots, tiller buds, endosperm seven days after fertilization, and interconnecting tissues such as pulvini and nodes.

The protein localises to the mitochondrion outer membrane. It catalyses the reaction a D-hexose + ATP = a D-hexose 6-phosphate + ADP + H(+). The enzyme catalyses D-fructose + ATP = D-fructose 6-phosphate + ADP + H(+). The catalysed reaction is D-glucose + ATP = D-glucose 6-phosphate + ADP + H(+). It functions in the pathway carbohydrate metabolism; hexose metabolism. It participates in carbohydrate degradation; glycolysis; D-glyceraldehyde 3-phosphate and glycerone phosphate from D-glucose: step 1/4. In terms of biological role, fructose and glucose phosphorylating enzyme. Involved in the regulation of cell expansion in spikelet hulls, grain size, and gibberellin biosynthesis and homeostasis. The polypeptide is Hexokinase-3 (Oryza sativa subsp. japonica (Rice)).